A 414-amino-acid chain; its full sequence is MLMLSKTAGAIPRPPRSNVRGFIRRFNVQPRALFHHKLVLGIETSCDDTAAAVVDETGNVLGEALHSQTEVHLKTGGIVPPVAQQLHRENIQRIVEEALSASGVSPSDLSAIATTIKPGLALSLGVGLSFSVQLVNQFKKPFIPIHHMEAHALTIRLTHKVGFPFLVLLISGGHCLLALVQSVSDFLLLGKSLDIAPGDMLDKVARRLSLIKHPECSTMSGGKAIEHLAKEGNRFHFTINPPMQNAKNCDFSFTGLQHVTDKLITHKEKEEGIEKGQILSSAADIAAAVQHATACHLAKRTHRAILFCQQKNLLSPANAVLVVSGGVASNLYIRRALEIVANATQCTLLCPPPRLCTDNGIMIAWNGIERLRAGLGILHDVEDIRYEPKCPLGIDISREVAEAAIKVPRLKMTL.

The transit peptide at 1–29 directs the protein to the mitochondrion; that stretch reads MLMLSKTAGAIPRPPRSNVRGFIRRFNVQ. 2 positions are modified to N6-acetyllysine: Lys-74 and Lys-140. Residues His-147 and His-151 each contribute to the a divalent metal cation site. Substrate-binding positions include 169 to 173 and Asp-202; that span reads LISGG. Position 203 is an N6-acetyllysine (Lys-203). Substrate contacts are provided by Gly-222 and Glu-226. 2 positions are modified to N6-acetyllysine: Lys-230 and Lys-299. Substrate contacts are provided by residues 329–330 and Thr-357; that span reads SN. Asp-358 provides a ligand contact to a divalent metal cation.

It belongs to the KAE1 / TsaD family. In terms of assembly, monomer. Requires a divalent metal cation as cofactor.

The protein localises to the mitochondrion. It catalyses the reaction L-threonylcarbamoyladenylate + adenosine(37) in tRNA = N(6)-L-threonylcarbamoyladenosine(37) in tRNA + AMP + H(+). Required for the formation of a threonylcarbamoyl group on adenosine at position 37 (t(6)A37) in mitochondrial tRNAs that read codons beginning with adenine. Probably involved in the transfer of the threonylcarbamoyl moiety of threonylcarbamoyl-AMP (TC-AMP) to the N6 group of A37. Involved in mitochondrial genome maintenance. The chain is tRNA N6-adenosine threonylcarbamoyltransferase, mitochondrial from Rattus norvegicus (Rat).